The sequence spans 100 residues: Large ribosomal subunit protein uL23 (100 aa).

It belongs to the universal ribosomal protein uL23 family. As to quaternary structure, part of the 50S ribosomal subunit. Contacts protein L29, and trigger factor when it is bound to the ribosome.

In terms of biological role, one of the early assembly proteins it binds 23S rRNA. One of the proteins that surrounds the polypeptide exit tunnel on the outside of the ribosome. Forms the main docking site for trigger factor binding to the ribosome. This Shewanella oneidensis (strain ATCC 700550 / JCM 31522 / CIP 106686 / LMG 19005 / NCIMB 14063 / MR-1) protein is Large ribosomal subunit protein uL23.